A 483-amino-acid chain; its full sequence is MDLQQQPLFRQKALVAGQWCDADNAEKTPIFNPATQELIGYVPNMGRAETERAIEAAYASWEMWKTKTAKERSALLKKWYDLILLNLDVLAEILTTEQGKPFNEAKGEIIYAASFIEWFAEEAKRIYGDIIPSPYPDARIVVNKQPIGVVAAITPWNFPAAMITRKVAPALAAGCPCIVKPAPETPFTALALADLAIQAGIPAEIMSVVTGDAAQIGDAIFASDHVRKFTFTGSTPIGKLLLEKSAKTLKKVSLELGGNAPFIVFDDADIEAAVEGALIAKFRNAGQTCVCVNRFLVQSGVYEKFIQVFKAKIESLKIGNGLEAGSEIGPLINAQAVAKVQSHIEDALSKNGRLITGGQVHATGELFFEPTLIADANTEMMVATQETFGPLAAIFKFDTEQQAIQMANDTEFGLAAYCYTRDLGRAWRMSEQLEYGMVGINKGLISNEVAPFGGIKHSGLGREGSKYGIEDYLEIKYTLFGGL.

Residues 156-157, 180-183, and 233-234 each bind NAD(+); these read WN, KPAP, and GS. The active-site Proton acceptor is Glu255. Leu256 is a binding site for NAD(+). Catalysis depends on Cys289, which acts as the Nucleophile. Glu386 provides a ligand contact to NAD(+).

The protein belongs to the aldehyde dehydrogenase family. In terms of assembly, homotetramer.

It carries out the reaction succinate semialdehyde + NAD(+) + H2O = succinate + NADH + 2 H(+). Involved in the degradation of the pyridine ring of trigonelline (TG; N-methylnicotinate) into succinate and methylamine as carbon and nitrogen sources, respectively. Catalyzes the NAD(+)-dependent oxidation of succinate semialdehyde to succinate. This Acinetobacter baylyi (strain ATCC 33305 / BD413 / ADP1) protein is Succinate semialdehyde dehydrogenase.